Consider the following 356-residue polypeptide: Protein pelota homolog (356 aa).

The protein belongs to the eukaryotic release factor 1 family. Pelota subfamily. As to quaternary structure, monomer. It depends on a divalent metal cation as a cofactor.

It localises to the cytoplasm. May function in recognizing stalled ribosomes, interact with stem-loop structures in stalled mRNA molecules, and effect endonucleolytic cleavage of the mRNA. May play a role in the release non-functional ribosomes and degradation of damaged mRNAs. Has endoribonuclease activity. This is Protein pelota homolog from Staphylothermus marinus (strain ATCC 43588 / DSM 3639 / JCM 9404 / F1).